Consider the following 247-residue polypeptide: 5'-nucleotidase SurE (247 aa).

A divalent metal cation-binding residues include aspartate 8, aspartate 9, serine 39, and asparagine 95.

The protein belongs to the SurE nucleotidase family. Requires a divalent metal cation as cofactor.

The protein resides in the cytoplasm. It carries out the reaction a ribonucleoside 5'-phosphate + H2O = a ribonucleoside + phosphate. In terms of biological role, nucleotidase that shows phosphatase activity on nucleoside 5'-monophosphates. This chain is 5'-nucleotidase SurE, found in Thermotoga petrophila (strain ATCC BAA-488 / DSM 13995 / JCM 10881 / RKU-1).